Here is a 1458-residue protein sequence, read N- to C-terminus: GTPase-activating protein and VPS9 domain-containing protein 1 (1458 aa).

A Ras-GAP domain is found at 147–385 (SYLLQVLRYL…AAFLDVVIGG (239 aa)). At Ser227 the chain carries Phosphoserine. Residues Thr390 and Thr458 each carry the phosphothreonine modification. The tract at residues 447-475 (AKPGKSSSLDMTPYSTPQMSPATTPANKK) is disordered. A compositionally biased stretch (polar residues) spans 451 to 473 (KSSSLDMTPYSTPQMSPATTPAN). Tyr460 is modified (phosphotyrosine). Ser466 is modified (phosphoserine). Thr470 is subject to Phosphothreonine. 2 positions are modified to phosphoserine: Ser566 and Ser569. 3 disordered regions span residues 574–608 (GISE…GSNG), 738–821 (LESC…PSQS), and 846–867 (HYAR…VGGN). A compositionally biased stretch (polar residues) spans 578-588 (GPSNRSNSVSS). A phosphoserine mark is found at Ser742, Ser746, and Ser757. A compositionally biased stretch (polar residues) spans 758–777 (SRPSTPGLSVVSGISATSED). Thr762 is modified (phosphothreonine). Ser766 carries the phosphoserine modification. Basic and acidic residues predominate over residues 778–789 (IPNKIEDLRSEC). A phosphoserine mark is found at Ser876, Ser902, Ser903, Ser908, and Ser914. Basic and acidic residues predominate over residues 888 to 902 (KQRHSYPERLVRSRS). 2 disordered regions span residues 888 to 1022 (KQRH…RLSA) and 1039 to 1072 (KRTS…EEAL). The span at 930-951 (AAATGATSLVAAPHSSSSSPSK) shows a compositional bias: low complexity. Composition is skewed to basic and acidic residues over residues 952–973 (DSSR…DRSR) and 995–1006 (EKQEKDKDDLGP). The residue at position 964 (Ser964) is a Phosphoserine. A compositionally biased stretch (polar residues) spans 1010–1022 (STLTDEPSPRLSA). Residues Ser1017 and Ser1044 each carry the phosphoserine modification. A compositionally biased stretch (basic and acidic residues) spans 1061-1071 (ESAHDSPREEA). Ser1076 and Ser1083 each carry phosphoserine. Residues 1318-1458 (ILRDQVLHEH…EFIKTIDDRK (141 aa)) form the VPS9 domain.

It belongs to the GAPVD1 family. As to quaternary structure, interacts with RAB5A. Interacts with TRIP10/CIP4. Present in adipocytes and fibroblasts (at protein level). Ubiquitously expressed.

The protein localises to the membrane. Its subcellular location is the endosome. In terms of biological role, acts both as a GTPase-activating protein (GAP) and a guanine nucleotide exchange factor (GEF), and participates in various processes such as endocytosis, insulin receptor internalization or LC2A4/GLUT4 trafficking. Acts as a GEF for the Ras-related protein RAB31 by exchanging bound GDP for free GTP, leading to regulate LC2A4/GLUT4 trafficking. In the absence of insulin, it maintains RAB31 in an active state and promotes a futile cycle between LC2A4/GLUT4 storage vesicles and early endosomes, retaining LC2A4/GLUT4 inside the cells. Upon insulin stimulation, it is translocated to the plasma membrane, releasing LC2A4/GLUT4 from intracellular storage vesicles. Also involved in EGFR trafficking and degradation, possibly by promoting EGFR ubiquitination and subsequent degradation by the proteasome. Has GEF activity for Rab5 and GAP activity for Ras. The polypeptide is GTPase-activating protein and VPS9 domain-containing protein 1 (Gapvd1) (Mus musculus (Mouse)).